A 360-amino-acid polypeptide reads, in one-letter code: Putative mRNA-decapping protein (360 aa).

The segment at 11–28 adopts a CCHC-type zinc-finger fold; sequence HICSNCGRSGHEFRNCIE. In terms of domain architecture, Nudix hydrolase spans 163 to 347; it reads YKYDNILYHF…KKRILTRVYL (185 aa). The short motif at 242-264 is the Nudix box element; it reads GRRDKRSEENMVCACREFEEETG. Glu249 is a Mg(2+) binding site. Glu258 acts as the Nucleophile in catalysis. Glu262 lines the Mg(2+) pocket.

It belongs to the Nudix hydrolase family. DIPP subfamily. Mg(2+) is required as a cofactor. Mn(2+) serves as cofactor.

It catalyses the reaction diphospho-myo-inositol polyphosphate + H2O = myo-inositol polyphosphate + phosphate.. In terms of biological role, might function as a decapping enzyme required for the removal of the 5'-end m7GpppN cap tethered to viral and host mRNAs to allow their decay in cells. In addition to the mRNA cap, probably also efficiently hydrolyzes diphosphoinositol polyphosphates. In Acanthamoeba polyphaga (Amoeba), this protein is Putative mRNA-decapping protein.